A 101-amino-acid polypeptide reads, in one-letter code: Ubiquitin-related modifier 1 (101 aa).

Glycine 101 carries the 1-thioglycine modification. Glycine 101 is covalently cross-linked (Glycyl lysine isopeptide (Gly-Lys) (interchain with K-? in acceptor proteins)).

The protein belongs to the URM1 family. Component of a complex at least composed of URM1, CTU2/NCS2 and CTU1/ATPBD3. In terms of processing, C-terminal thiocarboxylation occurs in 2 steps, it is first acyl-adenylated (-COAMP) via the hesA/moeB/thiF part of MOCS3, then thiocarboxylated (-COSH) via the rhodanese domain of MOCS3.

Its subcellular location is the cytoplasm. It participates in tRNA modification; 5-methoxycarbonylmethyl-2-thiouridine-tRNA biosynthesis. Its function is as follows. Acts as a sulfur carrier required for 2-thiolation of mcm(5)S(2)U at tRNA wobble positions of cytosolic tRNA(Lys), tRNA(Glu) and tRNA(Gln). Serves as sulfur donor in tRNA 2-thiolation reaction by being thiocarboxylated (-COSH) at its C-terminus by MOCS3. The sulfur is then transferred to tRNA to form 2-thiolation of mcm(5)S(2)U. Also acts as a ubiquitin-like protein (UBL) that is covalently conjugated via an isopeptide bond to lysine residues of target proteins such as MOCS3, ATPBD3, CTU2, USP15 and CAS. The thiocarboxylated form serves as substrate for conjugation and oxidative stress specifically induces the formation of UBL-protein conjugates. In Homo sapiens (Human), this protein is Ubiquitin-related modifier 1.